The primary structure comprises 264 residues: Thymidylate synthase (264 aa).

Residue arginine 21 participates in dUMP binding. Residue histidine 51 participates in (6R)-5,10-methylene-5,6,7,8-tetrahydrofolate binding. 126-127 (RR) lines the dUMP pocket. Catalysis depends on cysteine 146, which acts as the Nucleophile. DUMP contacts are provided by residues 166-169 (RSCD), asparagine 177, and 207-209 (HLY). Aspartate 169 is a binding site for (6R)-5,10-methylene-5,6,7,8-tetrahydrofolate. Alanine 263 is a (6R)-5,10-methylene-5,6,7,8-tetrahydrofolate binding site.

It belongs to the thymidylate synthase family. Bacterial-type ThyA subfamily. As to quaternary structure, homodimer.

The protein resides in the cytoplasm. It catalyses the reaction dUMP + (6R)-5,10-methylene-5,6,7,8-tetrahydrofolate = 7,8-dihydrofolate + dTMP. Its pathway is pyrimidine metabolism; dTTP biosynthesis. In terms of biological role, catalyzes the reductive methylation of 2'-deoxyuridine-5'-monophosphate (dUMP) to 2'-deoxythymidine-5'-monophosphate (dTMP) while utilizing 5,10-methylenetetrahydrofolate (mTHF) as the methyl donor and reductant in the reaction, yielding dihydrofolate (DHF) as a by-product. This enzymatic reaction provides an intracellular de novo source of dTMP, an essential precursor for DNA biosynthesis. The chain is Thymidylate synthase from Salmonella typhi.